The primary structure comprises 475 residues: Trifunctional enzyme subunit beta, mitochondrial (475 aa).

The N-terminal 34 residues, 1 to 34 (MTTILTSTFRNLSTTSKWALRSSIRPLSCSSQLH), are a transit peptide targeting the mitochondrion. N6-succinyllysine is present on lysine 53. Lysine 73 is modified (N6-acetyllysine; alternate). An N6-succinyllysine; alternate modification is found at lysine 73. The active-site Acyl-thioester intermediate is the cysteine 139. An intramembrane segment occupies 174–221 (IRHSRNMRKMMLDLNKAKTLGQRLSLLSKFRLNFLSPELPAVAEFSTN). The residue at position 189 (lysine 189) is an N6-acetyllysine; alternate. Lysine 189 carries the post-translational modification N6-succinyllysine; alternate. Lysine 191, lysine 273, and lysine 292 each carry N6-succinyllysine. The residue at position 294 (lysine 294) is an N6-acetyllysine; alternate. Lysine 294 carries the post-translational modification N6-succinyllysine; alternate. Lysine 299 is subject to N6-acetyllysine. An N6-acetyllysine; alternate modification is found at lysine 333. Lysine 333 is subject to N6-succinyllysine; alternate. An N6-acetyllysine mark is found at lysine 349 and lysine 362. Cysteine 459 acts as the Proton donor/acceptor in catalysis.

Belongs to the thiolase-like superfamily. Thiolase family. Heterotetramer of 2 alpha/HADHA and 2 beta/HADHB subunits; forms the mitochondrial trifunctional enzyme. Also purified as higher order heterooligomers including a 4 alpha/HADHA and 4 beta/HADHB heterooligomer which physiological significance remains unclear. The mitochondrial trifunctional enzyme interacts with MTLN. Interacts with RSAD2/viperin. In terms of processing, acetylation of Lys-202 is observed in liver mitochondria from fasted mice but not from fed mice.

The protein resides in the mitochondrion. It is found in the mitochondrion inner membrane. It localises to the mitochondrion outer membrane. Its subcellular location is the endoplasmic reticulum. The catalysed reaction is an acyl-CoA + acetyl-CoA = a 3-oxoacyl-CoA + CoA. It carries out the reaction butanoyl-CoA + acetyl-CoA = 3-oxohexanoyl-CoA + CoA. The enzyme catalyses hexanoyl-CoA + acetyl-CoA = 3-oxooctanoyl-CoA + CoA. It catalyses the reaction octanoyl-CoA + acetyl-CoA = 3-oxodecanoyl-CoA + CoA. The catalysed reaction is decanoyl-CoA + acetyl-CoA = 3-oxododecanoyl-CoA + CoA. It carries out the reaction dodecanoyl-CoA + acetyl-CoA = 3-oxotetradecanoyl-CoA + CoA. The enzyme catalyses tetradecanoyl-CoA + acetyl-CoA = 3-oxohexadecanoyl-CoA + CoA. It participates in lipid metabolism; fatty acid beta-oxidation. Its function is as follows. Mitochondrial trifunctional enzyme catalyzes the last three of the four reactions of the mitochondrial beta-oxidation pathway. The mitochondrial beta-oxidation pathway is the major energy-producing process in tissues and is performed through four consecutive reactions breaking down fatty acids into acetyl-CoA. Among the enzymes involved in this pathway, the trifunctional enzyme exhibits specificity for long-chain fatty acids. Mitochondrial trifunctional enzyme is a heterotetrameric complex composed of two proteins, the trifunctional enzyme subunit alpha/HADHA carries the 2,3-enoyl-CoA hydratase and the 3-hydroxyacyl-CoA dehydrogenase activities, while the trifunctional enzyme subunit beta/HADHB described here bears the 3-ketoacyl-CoA thiolase activity. The sequence is that of Trifunctional enzyme subunit beta, mitochondrial (Hadhb) from Mus musculus (Mouse).